Consider the following 628-residue polypeptide: ATP-dependent zinc metalloprotease FtsH 4 (628 aa).

The Cytoplasmic segment spans residues 1–14; the sequence is MAIKPQPQWQRRLA. The helical transmembrane segment at 15–35 threads the bilayer; the sequence is SVLLWGSTIYLLVNLLAPALF. The Lumenal portion of the chain corresponds to 36-119; that stretch reads RSQPPQVPYS…AAAPPAKNSW (84 aa). The chain crosses the membrane as a helical span at residues 120–140; it reads FGTLLSWVIPPLIFVGIWSFF. Topologically, residues 141 to 628 are cytoplasmic; the sequence is LNRNNNGAPG…QVQAPGTLVV (488 aa). Residue 214 to 221 participates in ATP binding; sequence GPPGTGKT. Residue His-438 coordinates Zn(2+). Glu-439 is an active-site residue. Zn(2+) is bound by residues His-442 and Asp-515.

In the central section; belongs to the AAA ATPase family. The protein in the C-terminal section; belongs to the peptidase M41 family. Homohexamer. Zn(2+) is required as a cofactor.

The protein resides in the cellular thylakoid membrane. In terms of biological role, acts as a processive, ATP-dependent zinc metallopeptidase for both cytoplasmic and membrane proteins. Plays a role in the quality control of integral membrane proteins. In Synechocystis sp. (strain ATCC 27184 / PCC 6803 / Kazusa), this protein is ATP-dependent zinc metalloprotease FtsH 4.